Reading from the N-terminus, the 199-residue chain is Peroxiredoxin-1 (199 aa).

A Thioredoxin domain is found at 6–165 (AYIGKLAPDF…TLRLVQAFQF (160 aa)). Residue cysteine 52 is the Cysteine sulfenic acid (-SOH) intermediate of the active site.

It belongs to the peroxiredoxin family. AhpC/Prx1 subfamily. Homodimer; disulfide-linked, upon oxidation. 5 homodimers assemble to form a ring-like decamer. Interacts with GDPD5; forms a mixed-disulfide with GDPD5. Interacts with SESN1 and SESN2. Interacts with FAM107A. The enzyme can be inactivated by further oxidation of the cysteine sulfenic acid (C(P)-SOH) to sulphinic acid (C(P)-SO2H) instead of its condensation to a disulfide bond. It can be reactivated by forming a transient disulfide bond with sulfiredoxin SRXN1, which reduces the cysteine sulfinic acid in an ATP- and Mg-dependent manner.

It localises to the cytoplasm. It catalyses the reaction a hydroperoxide + [thioredoxin]-dithiol = an alcohol + [thioredoxin]-disulfide + H2O. In terms of biological role, thiol-specific peroxidase that catalyzes the reduction of hydrogen peroxide and organic hydroperoxides to water and alcohols, respectively. Plays a role in cell protection against oxidative stress by detoxifying peroxides and as sensor of hydrogen peroxide-mediated signaling events. Might participate in the signaling cascades of growth factors and tumor necrosis factor-alpha by regulating the intracellular concentrations of H(2)O(2). Reduces an intramolecular disulfide bond in GDPD5 that gates the ability to GDPD5 to drive postmitotic motor neuron differentiation. This Gekko japonicus (Schlegel's Japanese gecko) protein is Peroxiredoxin-1 (PRDX1).